The sequence spans 325 residues: 5-dehydro-2-deoxygluconokinase (325 aa).

Belongs to the carbohydrate kinase PfkB family.

The enzyme catalyses 5-dehydro-2-deoxy-D-gluconate + ATP = 6-phospho-5-dehydro-2-deoxy-D-gluconate + ADP + H(+). Its pathway is polyol metabolism; myo-inositol degradation into acetyl-CoA; acetyl-CoA from myo-inositol: step 5/7. Catalyzes the phosphorylation of 5-dehydro-2-deoxy-D-gluconate (2-deoxy-5-keto-D-gluconate or DKG) to 6-phospho-5-dehydro-2-deoxy-D-gluconate (DKGP). The polypeptide is 5-dehydro-2-deoxygluconokinase (Bacillus licheniformis (strain ATCC 14580 / DSM 13 / JCM 2505 / CCUG 7422 / NBRC 12200 / NCIMB 9375 / NCTC 10341 / NRRL NRS-1264 / Gibson 46)).